The sequence spans 272 residues: Sugar-phosphatase AraL (272 aa).

This sequence belongs to the HAD-like hydrolase superfamily. Mg(2+) is required as a cofactor.

It carries out the reaction sugar phosphate + H2O = sugar + phosphate.. The enzyme catalyses O-phospho-L-serine + H2O = L-serine + phosphate. The catalysed reaction is O-phospho-D-serine + H2O = D-serine + phosphate. Catalyzes the dephosphorylation of C5 and C6 carbon sugars in vitro. Catalyzes the dephosphorylation of 3'-AMP and phosphoserine in vitro. This is Sugar-phosphatase AraL (araL) from Bacillus subtilis (strain 168).